Here is a 141-residue protein sequence, read N- to C-terminus: Translation initiation factor IF-1, chloroplastic (141 aa).

The N-terminal 46 residues, 1-46 (MLQLCSTFRPQLLLPCQFRFTNGVLIPQINYVASNSVVNIRPMIRC), are a transit peptide targeting the chloroplast. The tract at residues 49 to 69 (ASGGRGGANRSKPAKPQVKEG) is disordered. The region spanning 63 to 138 (KPQVKEGSNK…TKGRIIFRMS (76 aa)) is the S1-like domain.

It belongs to the IF-1 family. In terms of assembly, component of the 30S ribosomal translation pre-initiation complex which assembles on the 30S ribosome in the order IF-2 and IF-3, IF-1 and N-formylmethionyl-tRNA(fMet); mRNA recruitment can occur at any time during PIC assembly.

Its subcellular location is the plastid. It localises to the chloroplast. Functionally, one of the essential components for the initiation of protein synthesis. Stabilizes the binding of IF-2 and IF-3 on the 30S subunit to which N-formylmethionyl-tRNA(fMet) subsequently binds. Helps modulate mRNA selection, yielding the 30S pre-initiation complex (PIC). Upon addition of the 50S ribosomal subunit IF-1, IF-2 and IF-3 are released leaving the mature 70S translation initiation complex. The polypeptide is Translation initiation factor IF-1, chloroplastic (Arabidopsis thaliana (Mouse-ear cress)).